The chain runs to 361 residues: Chorismate synthase (361 aa).

Residues arginine 48 and arginine 54 each contribute to the NADP(+) site. FMN-binding positions include 125 to 127, 238 to 239, glycine 278, 293 to 297, and arginine 319; these read RSS, NA, and KPTSS.

It belongs to the chorismate synthase family. In terms of assembly, homotetramer. FMNH2 serves as cofactor.

It catalyses the reaction 5-O-(1-carboxyvinyl)-3-phosphoshikimate = chorismate + phosphate. Its pathway is metabolic intermediate biosynthesis; chorismate biosynthesis; chorismate from D-erythrose 4-phosphate and phosphoenolpyruvate: step 7/7. Its function is as follows. Catalyzes the anti-1,4-elimination of the C-3 phosphate and the C-6 proR hydrogen from 5-enolpyruvylshikimate-3-phosphate (EPSP) to yield chorismate, which is the branch point compound that serves as the starting substrate for the three terminal pathways of aromatic amino acid biosynthesis. This reaction introduces a second double bond into the aromatic ring system. The protein is Chorismate synthase of Vibrio parahaemolyticus serotype O3:K6 (strain RIMD 2210633).